Reading from the N-terminus, the 346-residue chain is NADH-quinone oxidoreductase subunit H 2 (346 aa).

A run of 8 helical transmembrane segments spans residues 14–34, 83–103, 136–156, 172–192, 208–228, 260–280, 289–309, and 324–344; these read IAMVLKVLVVFVFVLLTVAYA, FAFLIAPLIALVPAFIGFAVI, VGVLYILALASIGVYGIVLAG, SAQMISYELAAGLAIISVFML, GAWYAFKQPLAFILFFICSIA, FFMAEYANMVTVCAVTTTLFL, LPGWFWFIAKVYFLIFTCMWI, and LGWKVFLPLTLINIVVTGIIV.

Belongs to the complex I subunit 1 family. NDH-1 is composed of 14 different subunits. Subunits NuoA, H, J, K, L, M, N constitute the membrane sector of the complex.

It is found in the cell inner membrane. It carries out the reaction a quinone + NADH + 5 H(+)(in) = a quinol + NAD(+) + 4 H(+)(out). NDH-1 shuttles electrons from NADH, via FMN and iron-sulfur (Fe-S) centers, to quinones in the respiratory chain. The immediate electron acceptor for the enzyme in this species is believed to be ubiquinone. Couples the redox reaction to proton translocation (for every two electrons transferred, four hydrogen ions are translocated across the cytoplasmic membrane), and thus conserves the redox energy in a proton gradient. This subunit may bind ubiquinone. The chain is NADH-quinone oxidoreductase subunit H 2 from Geobacter metallireducens (strain ATCC 53774 / DSM 7210 / GS-15).